The chain runs to 226 residues: MKLGLVAGMLAVCFSFSSVAMTLKLTPEIDLLVVDGKNMSGSLLKGADSLELNSGMHQILFKVIKPLPTDPLVLYSSPPLIVVFNAHNTRSVAIKLPVINTLRDGHQFSKNPLYQLIGDNGHPLSVRHDVLRQDHLNNSTTLETVMAAYNVGKYNASVPAFAAIPPSPVSAVPGTTIPVAGVNTPHKTASLQGENVTEQMLQYWFLQANPETQKRFLIWAKKQPIH.

The N-terminal stretch at 1–20 (MKLGLVAGMLAVCFSFSSVA) is a signal peptide.

The protein belongs to the UPF0319 family.

In Yersinia pestis, this protein is UPF0319 protein YPO1442/y2728/YP_1333.